Here is a 124-residue protein sequence, read N- to C-terminus: Putative iron-sulfur cluster insertion protein ErpA (124 aa).

C52, C116, and C118 together coordinate iron-sulfur cluster.

This sequence belongs to the HesB/IscA family. As to quaternary structure, homodimer. Requires iron-sulfur cluster as cofactor.

Its function is as follows. Required for insertion of 4Fe-4S clusters. This Delftia acidovorans (strain DSM 14801 / SPH-1) protein is Putative iron-sulfur cluster insertion protein ErpA.